The following is a 237-amino-acid chain: Coat protein (237 aa).

The interval 1–24 is disordered; it reads MSAPASTTQPIGSTTSTTTKTAGA.

It belongs to the potexvirus capsid protein family.

The protein resides in the virion. Functionally, required for genome encapsidation. Forms ribonucleoprotein complexes along with TGB1 helicase and viral RNA. The polypeptide is Coat protein (Potato virus X (strain UK3) (PVX)).